The following is a 324-amino-acid chain: mRNA decay activator protein ZFP36 (324 aa).

Residues 1 to 15 (MDLAAIYKSLLSLSP) are necessary for nuclear export. Residues 1 to 98 (MDLAAIYKSL…PTSPTATPTT (98 aa)) form a necessary and sufficient for the association with mRNA decay enzymes and mRNA decay activation region. Necessary for localization of ARE-containing mRNAs to processing bodies (PBs) stretches follow at residues 1 to 172 (MDLA…DLAA) and 98 to 324 (TSSR…SVSE). Positions 15-46 (PELPSDLGETESSTSWASSGPWSLSSSDSSLP) are enriched in low complexity. Positions 15-50 (PELPSDLGETESSTSWASSGPWSLSSSDSSLPEVAA) are disordered. Serine 58 bears the Phosphoserine; by MAPKAPK2 mark. Residue serine 64 is modified to Phosphoserine. One copy of the P-P-P-P-G repeat lies at 69–73 (PPPPG). The interval 76–100 (PLAPRPSSDWSPSPTSPTATPTTSS) is disordered. Phosphoserine is present on residues serine 86 and serine 88. At threonine 90 the chain carries Phosphothreonine. A Phosphoserine modification is found at serine 91. The interval 93–166 (TATPTTSSRY…GSRCHFIHNP (74 aa)) is necessary for nuclear localization. The necessary for RNA-binding stretch occupies residues 95–171 (TPTTSSRYKT…FIHNPSEDLA (77 aa)). 2 C3H1-type zinc fingers span residues 101–129 (RYKTELCRTFSESGRCRYGAKCQFAHGLG) and 139–167 (KYKTELCHKFYLQGRCPYGSRCHFIHNPS). The interval 101–192 (RYKTELCRTF…ISFSGLPSGR (92 aa)) is necessary for interaction with PABPN1. Serine 167 bears the Phosphoserine mark. The segment at 172-324 (APGHPHVLRQ…PIFNRISVSE (153 aa)) is necessary for mRNA decay activation. Phosphoserine; by MAPKAPK2 is present on serine 184. Disordered regions lie at residues 185-227 (FSGL…LLLS) and 270-324 (PSAH…SVSE). The residue at position 195 (serine 195) is a Phosphoserine. One copy of the P-P-P-P-G repeat lies at 196–200 (PPPAS). Over residues 204 to 214 (PSVSSWSFSPS) the composition is skewed to low complexity. Serine 216 is subject to Phosphoserine. The stretch at 218–222 (PPPPG) is one P-P-P-P-G repeat. Serine 227 carries the post-translational modification Phosphoserine; by MAPK1; in vitro. A phosphoserine mark is found at serine 274, serine 294, and serine 321. Residues 310-324 (APRRLPIFNRISVSE) form an interaction with CNOT1 region.

As to quaternary structure, associates with cytoplasmic CCR4-NOT and PAN2-PAN3 deadenylase complexes to trigger ARE-containing mRNA deadenylation and decay processes. Part of a mRNA decay activation complex at least composed of poly(A)-specific exoribonucleases CNOT6, EXOSC2 and XRN1 and mRNA-decapping enzymes DCP1A and DCP2. Associates with the RNA exosome complex. Interacts (via phosphorylated form) with 14-3-3 proteins; these interactions promote exclusion of ZFP36 from cytoplasmic stress granules in response to arsenite treatment in a MAPKAPK2-dependent manner and does not prevent CCR4-NOT deadenylase complex recruitment or ZFP36-induced ARE-containing mRNA deadenylation and decay processes. Interacts with 14-3-3 proteins; these interactions occur in response to rapamycin in an Akt-dependent manner. Interacts with AGO2 and AGO4. Interacts (via C-terminus) with CNOT1; this interaction occurs in a RNA-independent manner and induces mRNA deadenylation. Interacts (via N-terminus) with CNOT6. Interacts with CNOT6L. Interacts (via C-terminus) with CNOT7; this interaction occurs in a RNA-independent manner, induces mRNA deadenylation and is inhibited in a phosphorylation MAPKAPK2-dependent manner. Interacts (via unphosphorylated form) with CNOT8; this interaction occurs in a RNA-independent manner and is inhibited in a phosphorylation MAPKAPK2-dependent manner. Interacts with DCP1A. Interacts (via N-terminus) with DCP2. Interacts with EDC3. Interacts (via N-terminus) with EXOSC2. Interacts with heat shock 70 kDa proteins. Interacts with KHSRP; this interaction increases upon cytokine-induced treatment. Interacts with MAP3K4; this interaction enhances the association with SH3KBP1/CIN85. Interacts with MAPKAPK2; this interaction occurs upon skeletal muscle satellite cell activation. Interacts with NCL. Interacts with NUP214; this interaction increases upon lipopolysaccharide (LPS) stimulation. Interacts with PABPC1; this interaction occurs in a RNA-dependent manner. Interacts (via hypophosphorylated form) with PABPN1 (via RRM domain and C-terminal arginine-rich region); this interaction occurs in the nucleus in a RNA-independent manner, decreases in presence of single-stranded poly(A) RNA-oligomer and in a p38 MAPK-dependent-manner and inhibits nuclear poly(A) tail synthesis. Interacts with PAN2. Interacts (via C3H1-type zinc finger domains) with PKM. Interacts (via C3H1-type zinc finger domains) with nuclear RNA poly(A) polymerase. Interacts with PPP2CA; this interaction occurs in LPS-stimulated cells and induces ZFP36 dephosphorylation, and hence may promote ARE-containing mRNAs decay. Interacts (via C-terminus) with PRR5L (via C-terminus); this interaction may accelerate ZFP36-mediated mRNA decay during stress. Interacts (via C-terminus) with SFN; this interaction occurs in a phosphorylation-dependent manner. Interacts (via extreme C-terminal region) with SH3KBP1/CIN85 (via SH3 domains); this interaction enhances MAP3K4-induced phosphorylation of ZFP36 at Ser-64 and Ser-91 and does not alter neither ZFP36 binding to ARE-containing transcripts nor TNF-alpha mRNA decay. Interacts with XRN1. Interacts (via C-terminus and Ser-184 phosphorylated form) with YWHAB; this interaction occurs in a p38/MAPKAPK2-dependent manner, increases cytoplasmic localization of ZFP36 and protects ZFP36 from Ser-184 dephosphorylation by serine/threonine phosphatase 2A, and hence may be crucial for stabilizing ARE-containing mRNAs. Interacts (via phosphorylated form) with YWHAE. Interacts (via C-terminus) with YWHAG; this interaction occurs in a phosphorylation-dependent manner. Interacts with YWHAH; this interaction occurs in a phosphorylation-dependent manner. Interacts with YWHAQ; this interaction occurs in a phosphorylation-dependent manner. Interacts with (via C-terminus) YWHAZ; this interaction occurs in a phosphorylation-dependent manner. Does not interact with SH3KBP1. Interacts (via P-P-P-P-G repeats) with GIGYF2; the interaction is direct. Phosphorylated. Phosphorylation at serine and/or threonine residues occurs in a p38 MAPK- and MAPKAPK2-dependent manner. Phosphorylated by MAPKAPK2 at Ser-58 and Ser-184; phosphorylation increases its stability and cytoplasmic localization, promotes binding to 14-3-3 adapter proteins and inhibits the recruitment of cytoplasmic CCR4-NOT and PAN2-PAN3 deadenylase complexes to the mRNA decay machinery, thereby inhibiting ZFP36-induced ARE-containing mRNA deadenylation and decay processes. Phosphorylation by MAPKAPK2 does not impair ARE-containing RNA-binding. Phosphorylated in a MAPKAPK2- and p38 MAPK-dependent manner upon skeletal muscle satellite cell activation; this phosphorylation inhibits ZFP36-mediated mRNA decay activity, and hence stabilizes MYOD1 mRNA. Phosphorylated by MAPK1 upon mitogen stimulation. Phosphorylated at Ser-64 and Ser-91; these phosphorylations increase in a SH3KBP1-dependent manner. Phosphorylated at serine and threonine residues in a pyruvate kinase PKM- and p38 MAPK-dependent manner. Phosphorylation at Ser-58 may participate in the PKM-mediated degradation of ZFP36 in a p38 MAPK-dependent manner. Dephosphorylated by serine/threonine phosphatase 2A at Ser-184. In terms of processing, ubiquitinated; pyruvate kinase (PKM)-dependent ubiquitination leads to proteasomal degradation through a p38 MAPK signaling pathway.

It localises to the nucleus. Its subcellular location is the cytoplasm. The protein localises to the cytoplasmic granule. It is found in the P-body. Functionally, zinc-finger RNA-binding protein that destabilizes numerous cytoplasmic AU-rich element (ARE)-containing mRNA transcripts by promoting their poly(A) tail removal or deadenylation, and hence provide a mechanism for attenuating protein synthesis. Acts as an 3'-untranslated region (UTR) ARE mRNA-binding adapter protein to communicate signaling events to the mRNA decay machinery. Recruits deadenylase CNOT7 (and probably the CCR4-NOT complex) via association with CNOT1, and hence promotes ARE-mediated mRNA deadenylation. Also functions by recruiting components of the cytoplasmic RNA decay machinery to the bound ARE-containing mRNAs. Self regulates by destabilizing its own mRNA. Binds to 3'-UTR ARE of numerous mRNAs. Also binds to ARE of its own mRNA. Plays a role in anti-inflammatory responses; suppresses tumor necrosis factor (TNF)-alpha production by stimulating ARE-mediated TNF-alpha mRNA decay and several other inflammatory ARE-containing mRNAs in interferon (IFN)- and/or lipopolysaccharide (LPS)-induced macrophages. Also plays a role in the regulation of dendritic cell maturation at the post-transcriptional level, and hence operates as part of a negative feedback loop to limit the inflammatory response. Promotes ARE-mediated mRNA decay of hypoxia-inducible factor HIF1A mRNA during the response of endothelial cells to hypoxia. Positively regulates early adipogenesis of preadipocytes by promoting ARE-mediated mRNA decay of immediate early genes (IEGs). Negatively regulates hematopoietic/erythroid cell differentiation by promoting ARE-mediated mRNA decay of the transcription factor STAT5B mRNA. Plays a role in maintaining skeletal muscle satellite cell quiescence by promoting ARE-mediated mRNA decay of the myogenic determination factor MYOD1 mRNA. Also associates with and regulates the expression of non-ARE-containing target mRNAs at the post-transcriptional level, such as MHC class I mRNAs. Participates in association with argonaute RISC catalytic components in the ARE-mediated mRNA decay mechanism; assists microRNA (miRNA) targeting ARE-containing mRNAs. May also play a role in the regulation of cytoplasmic mRNA decapping; enhances decapping of ARE-containing RNAs, in vitro. Involved in the delivery of target ARE-mRNAs to processing bodies (PBs). In addition to its cytosolic mRNA-decay function, affects nuclear pre-mRNA processing. Negatively regulates nuclear poly(A)-binding protein PABPN1-stimulated polyadenylation activity on ARE-containing pre-mRNA during LPS-stimulated macrophages. Also involved in the regulation of stress granule (SG) and P-body (PB) formation and fusion. Plays a role in the regulation of keratinocyte proliferation, differentiation and apoptosis. Plays a role as a tumor suppressor by inhibiting cell proliferation in breast cancer cells. This Bos taurus (Bovine) protein is mRNA decay activator protein ZFP36.